The chain runs to 114 residues: Large ribosomal subunit protein bL19 (114 aa).

Belongs to the bacterial ribosomal protein bL19 family.

In terms of biological role, this protein is located at the 30S-50S ribosomal subunit interface and may play a role in the structure and function of the aminoacyl-tRNA binding site. The sequence is that of Large ribosomal subunit protein bL19 from Clostridium botulinum (strain Loch Maree / Type A3).